A 338-amino-acid polypeptide reads, in one-letter code: MKVFYDKDCDLSLVKGKTVAIIGYGSQGHAHALNLHDSGVKVVVGLRKGGASWNKAANAGLEVAEVAEAVKRADIVMMLLPDENIAAVYRDEVHANIKAGAALAFAHGFNVHYGQVVPREDIDVIMVAPKAPGHTVRSTYSQGGGVPHLIAVYQDKSGSARDVALSYASANGGGRAGIIETNFREETETDLFGEQAVLCGGTVELIKAGFDTLVEAGYAPEMAYFECLHELKLIVDLIYEGGIANMNYSISNNAEFGEYETGPKVVTDATRQAMRECLTAIQTGEYAKKFILENAAGAPTLTSRRRINAESQIEQVGGKLRAMMPWIAANKLVDKAKN.

In terms of domain architecture, KARI N-terminal Rossmann spans 1 to 181 (MKVFYDKDCD…GGGRAGIIET (181 aa)). NADP(+)-binding positions include 24-27 (YGSQ), R47, and S52. H107 is a catalytic residue. An NADP(+)-binding site is contributed by G133. One can recognise a KARI C-terminal knotted domain in the interval 182–327 (NFREETETDL…GKLRAMMPWI (146 aa)). Residues D190, E194, E226, and E230 each coordinate Mg(2+). A substrate-binding site is contributed by S251.

It belongs to the ketol-acid reductoisomerase family. It depends on Mg(2+) as a cofactor.

The enzyme catalyses (2R)-2,3-dihydroxy-3-methylbutanoate + NADP(+) = (2S)-2-acetolactate + NADPH + H(+). The catalysed reaction is (2R,3R)-2,3-dihydroxy-3-methylpentanoate + NADP(+) = (S)-2-ethyl-2-hydroxy-3-oxobutanoate + NADPH + H(+). It participates in amino-acid biosynthesis; L-isoleucine biosynthesis; L-isoleucine from 2-oxobutanoate: step 2/4. It functions in the pathway amino-acid biosynthesis; L-valine biosynthesis; L-valine from pyruvate: step 2/4. Involved in the biosynthesis of branched-chain amino acids (BCAA). Catalyzes an alkyl-migration followed by a ketol-acid reduction of (S)-2-acetolactate (S2AL) to yield (R)-2,3-dihydroxy-isovalerate. In the isomerase reaction, S2AL is rearranged via a Mg-dependent methyl migration to produce 3-hydroxy-3-methyl-2-ketobutyrate (HMKB). In the reductase reaction, this 2-ketoacid undergoes a metal-dependent reduction by NADPH to yield (R)-2,3-dihydroxy-isovalerate. The chain is Ketol-acid reductoisomerase (NADP(+)) from Bordetella bronchiseptica (strain ATCC BAA-588 / NCTC 13252 / RB50) (Alcaligenes bronchisepticus).